The following is a 122-amino-acid chain: Large ribosomal subunit protein uL14 (122 aa).

Belongs to the universal ribosomal protein uL14 family. As to quaternary structure, part of the 50S ribosomal subunit. Forms a cluster with proteins L3 and L19. In the 70S ribosome, L14 and L19 interact and together make contacts with the 16S rRNA in bridges B5 and B8.

In terms of biological role, binds to 23S rRNA. Forms part of two intersubunit bridges in the 70S ribosome. The chain is Large ribosomal subunit protein uL14 from Azorhizobium caulinodans (strain ATCC 43989 / DSM 5975 / JCM 20966 / LMG 6465 / NBRC 14845 / NCIMB 13405 / ORS 571).